The sequence spans 144 residues: L-fucose mutarotase (144 aa).

Catalysis depends on H22, which acts as the Proton donor. Substrate contacts are provided by residues D30, R109, and 131–133 (YGN).

Belongs to the RbsD / FucU family. FucU mutarotase subfamily. Homodecamer.

The protein resides in the cytoplasm. The enzyme catalyses alpha-L-fucose = beta-L-fucose. Its pathway is carbohydrate metabolism; L-fucose metabolism. Functionally, involved in the anomeric conversion of L-fucose. The chain is L-fucose mutarotase from Haemophilus influenzae (strain 86-028NP).